A 231-amino-acid polypeptide reads, in one-letter code: ATP-dependent dethiobiotin synthetase BioD 2 (231 aa).

ATP is bound at residue 13 to 18; that stretch reads SVGKTV. A Mg(2+)-binding site is contributed by T17. K38 is an active-site residue. ATP-binding positions include D55, 112–115, 172–173, 201–203, and Q208; these read EGTG, NR, and PYL. Mg(2+)-binding residues include D55 and E112.

It belongs to the dethiobiotin synthetase family. In terms of assembly, homodimer. It depends on Mg(2+) as a cofactor.

The protein resides in the cytoplasm. The enzyme catalyses (7R,8S)-7,8-diammoniononanoate + CO2 + ATP = (4R,5S)-dethiobiotin + ADP + phosphate + 3 H(+). It participates in cofactor biosynthesis; biotin biosynthesis; biotin from 7,8-diaminononanoate: step 1/2. In terms of biological role, catalyzes a mechanistically unusual reaction, the ATP-dependent insertion of CO2 between the N7 and N8 nitrogen atoms of 7,8-diaminopelargonic acid (DAPA, also called 7,8-diammoniononanoate) to form a ureido ring. In Salmonella typhi, this protein is ATP-dependent dethiobiotin synthetase BioD 2.